We begin with the raw amino-acid sequence, 103 residues long: Putative double-stranded DNA mimic protein HD_0986 (103 aa).

It belongs to the putative dsDNA mimic protein family.

Functionally, may act as a double-stranded DNA (dsDNA) mimic. Probably regulates the activity of a dsDNA-binding protein. The polypeptide is Putative double-stranded DNA mimic protein HD_0986 (Haemophilus ducreyi (strain 35000HP / ATCC 700724)).